Reading from the N-terminus, the 820-residue chain is Trimethylamine-N-oxide reductase (820 aa).

The tat-type signal signal peptide spans 1-33 (MAITRRSFLKGVATTSAASVIGPSLLASASANA). A Mo-bis(molybdopterin guanine dinucleotide)-binding site is contributed by Ser179.

The protein belongs to the prokaryotic molybdopterin-containing oxidoreductase family. The cofactor is Mo-bis(molybdopterin guanine dinucleotide). Post-translationally, predicted to be exported by the Tat system. The position of the signal peptide cleavage has not been experimentally proven.

The protein localises to the periplasm. It carries out the reaction trimethylamine + 2 Fe(III)-[cytochrome c] + H2O = trimethylamine N-oxide + 2 Fe(II)-[cytochrome c] + 3 H(+). Its function is as follows. Reduces trimethylamine-N-oxide (TMAO) into trimethylamine; an anaerobic reaction coupled to energy-yielding reactions. The chain is Trimethylamine-N-oxide reductase (torA) from Vibrio parahaemolyticus serotype O3:K6 (strain RIMD 2210633).